We begin with the raw amino-acid sequence, 471 residues long: 3-isopropylmalate dehydratase large subunit (471 aa).

Residues Cys-351, Cys-412, and Cys-415 each contribute to the [4Fe-4S] cluster site.

Belongs to the aconitase/IPM isomerase family. LeuC type 1 subfamily. Heterodimer of LeuC and LeuD. [4Fe-4S] cluster serves as cofactor.

The catalysed reaction is (2R,3S)-3-isopropylmalate = (2S)-2-isopropylmalate. Its pathway is amino-acid biosynthesis; L-leucine biosynthesis; L-leucine from 3-methyl-2-oxobutanoate: step 2/4. Functionally, catalyzes the isomerization between 2-isopropylmalate and 3-isopropylmalate, via the formation of 2-isopropylmaleate. This chain is 3-isopropylmalate dehydratase large subunit, found in Hahella chejuensis (strain KCTC 2396).